Reading from the N-terminus, the 321-residue chain is Cytochrome c biogenesis protein CcsA (321 aa).

8 helical membrane-spanning segments follow: residues 9 to 29 (ILTH…LMTL), 44 to 64 (GLIA…IYSG), 71 to 91 (LYES…VPYF), 97 to 117 (LLST…TSGL), 143 to 163 (MILS…LLVI), 227 to 247 (VISL…VWAN), 261 to 275 (TWAF…IYLH), and 288 to 308 (AIVA…VNLL).

It belongs to the CcmF/CycK/Ccl1/NrfE/CcsA family. As to quaternary structure, may interact with Ccs1.

It localises to the plastid. It is found in the chloroplast thylakoid membrane. In terms of biological role, required during biogenesis of c-type cytochromes (cytochrome c6 and cytochrome f) at the step of heme attachment. This is Cytochrome c biogenesis protein CcsA from Nandina domestica (Heavenly bamboo).